We begin with the raw amino-acid sequence, 175 residues long: 3-hydroxydecanoyl-[acyl-carrier-protein] dehydratase (175 aa).

Histidine 71 is a catalytic residue.

This sequence belongs to the thioester dehydratase family. FabA subfamily. Homodimer.

Its subcellular location is the cytoplasm. The enzyme catalyses a (3R)-hydroxyacyl-[ACP] = a (2E)-enoyl-[ACP] + H2O. It catalyses the reaction (3R)-hydroxydecanoyl-[ACP] = (2E)-decenoyl-[ACP] + H2O. The catalysed reaction is (2E)-decenoyl-[ACP] = (3Z)-decenoyl-[ACP]. The protein operates within lipid metabolism; fatty acid biosynthesis. In terms of biological role, necessary for the introduction of cis unsaturation into fatty acids. Catalyzes the dehydration of (3R)-3-hydroxydecanoyl-ACP to E-(2)-decenoyl-ACP and then its isomerization to Z-(3)-decenoyl-ACP. Can catalyze the dehydratase reaction for beta-hydroxyacyl-ACPs with saturated chain lengths up to 16:0, being most active on intermediate chain length. This chain is 3-hydroxydecanoyl-[acyl-carrier-protein] dehydratase, found in Rhodopseudomonas palustris (strain BisB5).